The sequence spans 347 residues: GMP reductase (347 aa).

108–131 (ADFEKTKQILDLNPALNFVCIDVA) contacts NADP(+). Positions 181 and 183 each coordinate K(+). Cysteine 186 (thioimidate intermediate) is an active-site residue. 216-239 (IVSDGGCTTPGDVAKAFGGGADFV) is an NADP(+) binding site.

The protein belongs to the IMPDH/GMPR family. GuaC type 1 subfamily. Homotetramer.

The enzyme catalyses IMP + NH4(+) + NADP(+) = GMP + NADPH + 2 H(+). Its function is as follows. Catalyzes the irreversible NADPH-dependent deamination of GMP to IMP. It functions in the conversion of nucleobase, nucleoside and nucleotide derivatives of G to A nucleotides, and in maintaining the intracellular balance of A and G nucleotides. This Shigella flexneri serotype 5b (strain 8401) protein is GMP reductase.